The chain runs to 1214 residues: Delta-latroinsectotoxin-Lt1a (1214 aa).

Positions 64–89 (IGSIPVIGEVVGIVTAPIAIVSHITS) are helix H2 is the probable transmembrane region of the tetrameric pore inserted in the target cell membrane. The interval 250-269 (ALYALFYGTQTYAAVMFFLL) is helix H8 is the probable transmembrane region of the tetrameric pore inserted in the target cell membrane. ANK repeat units follow at residues 464-497 (DIHRDLYDAALNINKLKAVDEATTLIEKGADIEA), 501-532 (NDRSAMHAVAYRGNNKIALRFLLKNQSIDIEL), 536-565 (NGFTPLHIAAEAGQAGFVKLLINHGADVNA), 570-600 (TNLTPLHLATRSGFSKTVRNLLESPNIKVNE), 604-633 (DGFTPLHTAVMSTYMVVDALLNHPDIDKNA), 637-666 (SGLTPFHLAIINESQEVAESLVESNADLNI), 670-699 (NHMAPIHFAASMGSIKMLRYLISIKDKVSI), 706-734 (NNWTPLHFAIYFKKEDAAKELLKQDDINL), 740-769 (GNLTVLHLAVSTGQINIIKELLKRGSNIEE), 773-802 (EGYTSLHIAAMRKEPEIAVVLIENGADIEA), 806-835 (DNLTPLHSAAKIGRKSTVLYLLEKGADIGA), 839-868 (DGSTALHLAVSGRKMKTVETLLNKGANLKE), 872-901 (NKYLPIHKAIINDDLDMVRLFLEKDPSLKD), 906-936 (EGRTSIMLIVQKLLLELYNYFINNYAETLDE), and 966-994 (VKPTILVTIKLMEYCLKKLREESGAPEGS). Residues 1020 to 1214 (IVKETNSRYL…IDVHQKMFLR (195 aa)) constitute a propeptide, C-terminal domain cleavage is required for toxin activation.

Belongs to the cationic peptide 01 (latrotoxin) family. 04 (delta-latroinsectotoxin) subfamily. In terms of assembly, homotetramer in membrane. Expressed by the venom gland.

It is found in the secreted. The protein localises to the target cell membrane. Its function is as follows. Insecticidal presynaptic neurotoxin that induces massive neurotransmitter release at insect (but not vertebrate) neuromuscular junctions. Native toxin forms cation-permeable pores (with high permeability to calcium) in lipid membranes locust muscle membrane and artificial lipid bilayers. May bind to insect neurexin-1 homolog, insect adhesion G protein-coupled receptor L1 homolog, and insect receptor-type tyrosine-protein phosphatase S homolog, and induces neurotransmitter exocytosis both by forming tetrameric pores in membranes and signaling via G protein-coupled receptor. Oligomerization is a process independent of divalent cations. This is Delta-latroinsectotoxin-Lt1a from Latrodectus tredecimguttatus (Mediterranean black widow spider).